A 111-amino-acid polypeptide reads, in one-letter code: Type III endosome membrane protein TEMP (111 aa).

Residues 1–27 are Extracellular-facing; that stretch reads MIGGNTTIISGAINASTEAPGLGTGGR. N-linked (GlcNAc...) asparagine glycosylation is present at asparagine 5. The helical; Signal-anchor for type III membrane protein transmembrane segment at 28–48 threads the bilayer; sequence AWPVLVGVVLGAVVLSILIAL. Over 49–111 the chain is Cytoplasmic; it reads AAKCHLCRRY…TTGSRDHFSL (63 aa). Residues 64–111 are disordered; that stretch reads HRPLSSAGGGNRPPVGEDEDDDGFIEDNYIQPGAGEMETTGSRDHFSL. A compositionally biased stretch (acidic residues) spans 79–88; it reads GEDEDDDGFI.

Expressed in stomach, kidney, large and small intestine and kidney.

It localises to the membrane. The protein resides in the early endosome. Its subcellular location is the recycling endosome. It is found in the cell membrane. In terms of biological role, may be involved in membrane trafficking between endosomes and plasma membrane. This is Type III endosome membrane protein TEMP from Mus musculus (Mouse).